Consider the following 207-residue polypeptide: HTH-type transcriptional regulator AqdR (207 aa).

The HTH tetR-type domain occupies 16–76 (ARFRERVLDA…DALLTRTQAE (61 aa)). Residues 39-58 (GFADVARKAGVNGVSLYRRW) constitute a DNA-binding region (H-T-H motif).

In terms of biological role, may regulate the expression of genes involved in the degradation of the Pseudomonas aeruginosa quorum sensing signal molecules HHQ (2-heptyl-4-quinolone) and PQS (2-heptyl-3-hydroxy-4-quinolone). The polypeptide is HTH-type transcriptional regulator AqdR (Rhodococcus erythropolis (Arthrobacter picolinophilus)).